The sequence spans 417 residues: MTREHFLEGKDIVVAGAGVAGLAFALNLQRQWGDNVPPLRVVVYDRDKREVDLRRQGYSQTLSGIKEDTGLVVLKQLGLLDKVIDGAVMTDAISKFTIWDKDWNASPSFNVPAYGDMPTSAVRIPRRVLRTILIEAAEAAGIEVHWSVSCEDFEYLDDGRVGIRLRNADDGEIIETRACDLLVAADGANSKIRTILRPDDTLQYTGLMMMGGVAEFPHGAVPDHIRDKWGMVLTDQGISCFLSPTSQMGYHWGLSWWEQSPRAPPATWSIEYTQSLKSEALRRSRVIADPFATIVKRTDPSTMFIMAGMDKRPFSHEHLRKVVFIGDSNHAFSPLAGNGANVALKDGYDLAEQLCKASCMDDAISQFDRESVPRALRTLDRSHERIASAHTTQLDRDQFTDGSGANDFLVGQQHSDK.

Residues 45–48, Arg-126, and Asp-327 each bind FAD; that span reads DRDK. The span at 389 to 399 shows a compositional bias: basic and acidic residues; it reads AHTTQLDRDQF. A disordered region spans residues 389–417; sequence AHTTQLDRDQFTDGSGANDFLVGQQHSDK.

Belongs to the aromatic-ring hydroxylase family. KMO subfamily. The cofactor is FAD.

It functions in the pathway secondary metabolite biosynthesis; flavonoid biosynthesis. Monooxygenase; part of the gene cluster that mediates the biosynthesis of chlorflavonin, a fungal flavonoid with acetolactate synthase inhibitory activity. Within the pathway, cfoF is responsible for the hydroxylation of the flavonoid skeleton at position C3. The pathway begins with the PKS-NRPS hybrid synthetase cfoA that uses benzoic acid or p-hydroxybenzoic acid as a starter unit with four rounds of chain elongation using malonyl-CoA to form the chalcone skeleton. Then, a new type of chalcone isomerase, cfoK, catalyzes the conversion of the chalcone into a flavanone by a histidine-mediated oxa-Michael addition mechanism. The desaturation of flavanone to flavone is catalyzed by a new type of flavone synthase, the flavin mononucleotide (FMN)-dependent oxidoreductase cfoJ. Monooxygenases cfoF, cfoG, and P450 cfoH are responsible for the hydroxylation of the flavonoid skeleton at sites C3, C8, and C2', respectively. Like cfoF, the dehydratase cfoI plays also a role in the hydroxylation of position C3. Methyltransferases cfoB, cfoC, and cfoD then catalyze the methylation of C7-OH, C8-OH, and C3-OH, respectively. Finally, the monooxygenase cfoE is responsible for the chlorination of flavonoid at position C3'. This Aspergillus candidus protein is Monooxygenase cfoF.